A 164-amino-acid chain; its full sequence is Lipoprotein signal peptidase (164 aa).

Transmembrane regions (helical) follow at residues 6 to 26 (LGVLAGIVALVLDQVTKLWLL), 39 to 59 (VLPFFDLVLAWNTGISYGWFS), 65 to 85 (GQILMLAFKAVAIVALAIWMA), and 88 to 108 (TTKLATIGLGLIIGGAIGNAI). Residues Asp118 and Asp140 contribute to the active site. A helical transmembrane segment spans residues 141-161 (VAIVVGVAALLYDSLIGLPAA).

This sequence belongs to the peptidase A8 family.

The protein resides in the cell inner membrane. It carries out the reaction Release of signal peptides from bacterial membrane prolipoproteins. Hydrolyzes -Xaa-Yaa-Zaa-|-(S,diacylglyceryl)Cys-, in which Xaa is hydrophobic (preferably Leu), and Yaa (Ala or Ser) and Zaa (Gly or Ala) have small, neutral side chains.. It participates in protein modification; lipoprotein biosynthesis (signal peptide cleavage). This protein specifically catalyzes the removal of signal peptides from prolipoproteins. This chain is Lipoprotein signal peptidase, found in Rhodopseudomonas palustris (strain ATCC BAA-98 / CGA009).